The following is a 340-amino-acid chain: Methionine import ATP-binding protein MetN (340 aa).

An ABC transporter domain is found at 5–243 (IEFRGVTKSF…PQTTTARRFV (239 aa)). 40–47 (GYSGAGKS) is a binding site for ATP.

The protein belongs to the ABC transporter superfamily. Methionine importer (TC 3.A.1.24) family. In terms of assembly, the complex is composed of two ATP-binding proteins (MetN), two transmembrane proteins (MetI) and a solute-binding protein (MetQ).

The protein resides in the cell membrane. It catalyses the reaction L-methionine(out) + ATP + H2O = L-methionine(in) + ADP + phosphate + H(+). It carries out the reaction D-methionine(out) + ATP + H2O = D-methionine(in) + ADP + phosphate + H(+). In terms of biological role, part of the ABC transporter complex MetNIQ involved in methionine import. Responsible for energy coupling to the transport system. The sequence is that of Methionine import ATP-binding protein MetN from Leifsonia xyli subsp. xyli (strain CTCB07).